A 113-amino-acid chain; its full sequence is Hydrogenase maturation factor HypA (113 aa).

Position 2 (His2) interacts with Ni(2+). Cys73, Cys76, Cys89, and Cys92 together coordinate Zn(2+).

Belongs to the HypA/HybF family.

Its function is as follows. Involved in the maturation of [NiFe] hydrogenases. Required for nickel insertion into the metal center of the hydrogenase. This Azotobacter chroococcum mcd 1 protein is Hydrogenase maturation factor HypA.